Reading from the N-terminus, the 486-residue chain is Probable transporter MCH1 (486 aa).

Residues 1–29 are Cytoplasmic-facing; it reads MPLSKVEHYLSYHTRLLLPHVLSLQSSHR. Residues 30–50 form a helical membrane-spanning segment; it reads VAYIFSLLSAVSTGFITLISL. Residues 51–67 are Vacuolar-facing; that stretch reads YSQPWQKHLNYSSWQIN. N-linked (GlcNAc...) asparagine glycosylation is present at Asn60. The chain crosses the membrane as a helical span at residues 68-88; that stretch reads TIASMTNLGMYLTPPILGMIA. Residues 89-93 lie on the Cytoplasmic side of the membrane; it reads DSHGP. The chain crosses the membrane as a helical span at residues 94–114; sequence ITLSLLAIIGFIPSYSYLAYV. Residues 115 to 133 lie on the Vacuolar side of the membrane; the sequence is FNHPELSLGGNGDSSFNLS. N-linked (GlcNAc...) asparagine glycosylation occurs at Asn131. The chain crosses the membrane as a helical span at residues 134–154; sequence IICFVFIGISTSALYFSALLT. Over 155-163 the chain is Cytoplasmic; sequence CTKLYPHTK. Residues 164-184 traverse the membrane as a helical segment; sequence LLSISLPTTCYGISSVVGSQL. The Vacuolar portion of the chain corresponds to 185 to 212; it reads LRIKWFWSSNASSSSSNSDLNLGRVFQT. N-linked (GlcNAc...) asparagine glycosylation is present at Asn194. A helical transmembrane segment spans residues 213-233; sequence FALVYVVIGLLAWIATSVVSL. Topologically, residues 234 to 279 are cytoplasmic; the sequence is LHFNEEQDNQKRLDDQTDVEQSPLLERSNHVQEKFTQTMLRIFSDP. Ser255 carries the post-translational modification Phosphoserine. A helical transmembrane segment spans residues 280–300; it reads VTYILAVSILLSLGPLEMFIA. Topologically, residues 301-320 are vacuolar; the sequence is NMGSLTNLLVQLDAPTLSTK. Residues 321 to 343 traverse the membrane as a helical segment; sequence LLSTYALSSTFTRLLTGIVADFF. The Cytoplasmic segment spans residues 344-347; it reads AKKK. Residues 348–368 form a helical membrane-spanning segment; that stretch reads ISIKWILLTFLSLGVCAQLFL. The Vacuolar segment spans residues 369–385; that stretch reads LKMTSSASPWGLVPTGS. Residues 386-406 form a helical membrane-spanning segment; sequence LVGIVYGGLFTVYPTLVLLVW. Residues 407 to 413 lie on the Cytoplasmic side of the membrane; it reads GERSFGT. A helical transmembrane segment spans residues 414–434; it reads VYGSLLIAPAIGSMIFCMLYA. Residues 435–456 lie on the Vacuolar side of the membrane; that stretch reads KFYDSRCMSGGGDLRNPSCISA. Residues 457-477 form a helical membrane-spanning segment; sequence VYKYSSIAFVVSAVLSAVVFW. Residues 478–486 lie on the Cytoplasmic side of the membrane; it reads KLKSRKLRI.

This sequence belongs to the major facilitator superfamily.

The protein resides in the vacuole membrane. In terms of biological role, probable transporter. Does not act in the transport of monocarboxylic acids across the plasma membrane. This chain is Probable transporter MCH1 (MCH1), found in Saccharomyces cerevisiae (strain ATCC 204508 / S288c) (Baker's yeast).